Consider the following 464-residue polypeptide: NADH dehydrogenase [ubiquinone] flavoprotein 1, mitochondrial (464 aa).

Residues 1–20 constitute a mitochondrion transit peptide; the sequence is MLAARRLLGWSLPARVSVRF. Lysine 81 bears the N6-acetyllysine; alternate mark. The residue at position 81 (lysine 81) is an N6-succinyllysine; alternate. 87-96 provides a ligand contact to NADH; that stretch reads GRGGAGFPTG. Lysine 104 bears the N6-acetyllysine mark. 199-247 lines the FMN pocket; sequence RGAGAYICGEETALIESIEGKQGKPRLKPPFPADVGVFGCPTTVANVET. Omega-N-methylarginine is present on arginine 257. Lysine 375 bears the N6-acetyllysine mark. [4Fe-4S] cluster contacts are provided by cysteine 379, cysteine 382, cysteine 385, and cysteine 425.

It belongs to the complex I 51 kDa subunit family. In terms of assembly, core subunit of respiratory chain NADH dehydrogenase (Complex I) which is composed of 45 different subunits. This is a component of the flavoprotein-sulfur (FP) fragment of the enzyme. Interacts with RAB5IF. FMN is required as a cofactor. The cofactor is [4Fe-4S] cluster.

Its subcellular location is the mitochondrion inner membrane. The catalysed reaction is a ubiquinone + NADH + 5 H(+)(in) = a ubiquinol + NAD(+) + 4 H(+)(out). Functionally, core subunit of the mitochondrial membrane respiratory chain NADH dehydrogenase (Complex I) which catalyzes electron transfer from NADH through the respiratory chain, using ubiquinone as an electron acceptor. Part of the peripheral arm of the enzyme, where the electrons from NADH are accepted by flavin mononucleotide (FMN) and then passed along a chain of iron-sulfur clusters by electron tunnelling to the final acceptor ubiquinone. Contains FMN, which is the initial electron acceptor as well as one iron-sulfur cluster. The sequence is that of NADH dehydrogenase [ubiquinone] flavoprotein 1, mitochondrial from Pongo pygmaeus (Bornean orangutan).